We begin with the raw amino-acid sequence, 524 residues long: Cysteine--tRNA ligase (524 aa).

Cys29 contacts Zn(2+). Residues 31 to 41 (PTVQAAPHVGH) carry the 'HIGH' region motif. The Zn(2+) site is built by Cys207, His232, and Glu236. Residues 246-258 (ARPASNAASADSP) are compositionally biased toward low complexity. The interval 246–273 (ARPASNAASADSPGPGGGEPGGGEPSSG) is disordered. Residues 259–270 (GPGGGEPGGGEP) are compositionally biased toward gly residues. A 'KMSKS' region motif is present at residues 291–295 (KMSKS). Lys294 serves as a coordination point for ATP.

Belongs to the class-I aminoacyl-tRNA synthetase family. In terms of assembly, monomer. Zn(2+) is required as a cofactor.

It is found in the cytoplasm. It catalyses the reaction tRNA(Cys) + L-cysteine + ATP = L-cysteinyl-tRNA(Cys) + AMP + diphosphate. The polypeptide is Cysteine--tRNA ligase (Frankia casuarinae (strain DSM 45818 / CECT 9043 / HFP020203 / CcI3)).